A 100-amino-acid polypeptide reads, in one-letter code: Proline-rich protein 15-like protein (100 aa).

The disordered stretch occupies residues 29 to 51 (YAQTEGGAEPPGPDAGDPHSDFN).

The protein belongs to the PRR15 family.

This Mus musculus (Mouse) protein is Proline-rich protein 15-like protein (Prr15l).